A 239-amino-acid chain; its full sequence is Cell number regulator 6 (239 aa).

Residues 1-10 show a composition bias toward polar residues; that stretch reads MAEDATSSHP. Positions 1–33 are disordered; the sequence is MAEDATSSHPSRYVKLTKDQDAPAEDIRPGELN. The span at 16–29 shows a compositional bias: basic and acidic residues; it reads LTKDQDAPAEDIRP. 2 consecutive transmembrane segments (helical) span residues 107 to 127 and 136 to 156; these read CVCHAVFVEGGITLAILTAIF and FLIGEGLVFSWWLCATYTGIF.

It belongs to the cornifelin family. In terms of tissue distribution, expressed in roots, leaves, stalks, apical meristems, immature ears, endosperm, pericarp and tassel spikelets.

Its subcellular location is the membrane. This Zea mays (Maize) protein is Cell number regulator 6 (CNR6).